The sequence spans 547 residues: Chaperonin GroEL 1 (547 aa).

Residues 30–33, lysine 51, 87–91, glycine 415, 479–481, and aspartate 495 each bind ATP; these read TLGP, DGTTT, and NAA. The interval 525–547 is disordered; it reads PKKKGAPAGGGMGGMGGMDEMDY. Gly residues predominate over residues 531 to 541; that stretch reads PAGGGMGGMGG.

Belongs to the chaperonin (HSP60) family. Forms a cylinder of 14 subunits composed of two heptameric rings stacked back-to-back. Interacts with the co-chaperonin GroES.

It is found in the cytoplasm. It carries out the reaction ATP + H2O + a folded polypeptide = ADP + phosphate + an unfolded polypeptide.. Together with its co-chaperonin GroES, plays an essential role in assisting protein folding. The GroEL-GroES system forms a nano-cage that allows encapsulation of the non-native substrate proteins and provides a physical environment optimized to promote and accelerate protein folding. This Anaeromyxobacter sp. (strain Fw109-5) protein is Chaperonin GroEL 1.